The primary structure comprises 502 residues: Cytochrome P450 CYP94D109 (502 aa).

A helical membrane pass occupies residues 3-23; it reads SLSLIFISFITLIVFLVVSAS. Cys437 is a binding site for heme.

This sequence belongs to the cytochrome P450 family. In terms of tissue distribution, mainly expressed in leaves and, at low levels, in roots, fruits and stems.

Its subcellular location is the membrane. It participates in steroid metabolism; cholesterol metabolism. Its function is as follows. Involved in the biosynthesis of spiroketal steroid and saponin natural products from cholesterol such as diosgenin and analogs (e.g. furostanol and spirostanol), plant defense compounds used as main precursors for the industrial production of steroid hormones. During the 5,6-spiroketalization of cholesterol, may catalyze the 27-monohydroxylation of furostanol-type steroid to an intermediate product that undergoes a stereospecific formation of the terminal heterocycle to yield diosgenin. The chain is Cytochrome P450 CYP94D109 from Paris polyphylla (Daiswa polyphylla).